Here is a 205-residue protein sequence, read N- to C-terminus: Probable thymidylate kinase (205 aa).

7-14 (GIDGAGKS) is an ATP binding site.

It belongs to the thymidylate kinase family.

It carries out the reaction dTMP + ATP = dTDP + ADP. The protein is Probable thymidylate kinase of Thermococcus onnurineus (strain NA1).